Here is a 2623-residue protein sequence, read N- to C-terminus: Immunoglobulin superfamily member 10 (2623 aa).

An N-terminal signal peptide occupies residues 1–28 (MKVKGRGITCLLVSFAVICLVATPGGKA). Residues 29 to 56 (CPRRCACYMPTEVHCTFRYLTSIPDSIP) form the LRRNT domain. LRR repeat units follow at residues 58-79 (NVER…DFSG), 82-103 (KLEL…TFSD), 106-127 (ALQV…TFYG), 130-151 (SLTR…VFYG), 154-175 (FLRL…TFVS), and 186-207 (FIKF…MVSY). The LRRCT domain maps to 219–281 (NPWTCDCHLK…VSAAAFQCAK (63 aa)). Asn-319 and Asn-439 each carry an N-linked (GlcNAc...) asparagine glycan. Ig-like C2-type domains are found at residues 461 to 567 (PRAE…YRIT) and 571 to 661 (PLVE…FQVS). Cystine bridges form between Cys-497–Cys-551 and Cys-595–Cys-645. Asn-627 carries an N-linked (GlcNAc...) asparagine glycan. Disordered regions lie at residues 668–692 (RPLE…HLKE) and 767–788 (AMPD…QLPN). N-linked (GlcNAc...) asparagine glycosylation is found at Asn-774 and Asn-999. Disordered stretches follow at residues 1334 to 1376 (TQTE…AMTP) and 1434 to 1453 (STIA…TTTR). Residues 1335–1356 (QTERSRAQTIQREQEPQKKNRT) are compositionally biased toward basic and acidic residues. The span at 1357 to 1373 (DPNISPDQSSGFTTPTA) shows a compositional bias: polar residues. Ig-like C2-type domains are found at residues 1648 to 1739 (PRIV…VTLS), 1745 to 1836 (PRIL…VKIQ), 1841 to 1933 (PPVI…VMLT), 1941 to 2034 (PRIE…VSLR), 2037 to 2135 (PAKI…VHLT), 2141 to 2229 (PRIR…YKLD), 2234 to 2331 (PPLI…LEVL), 2337 to 2427 (PTFR…VILE), 2432 to 2518 (PVIL…TLIT), and 2528 to 2623 (PRIT…IQVI). Cystine bridges form between Cys-1670–Cys-1723, Cys-1767–Cys-1820, and Cys-1864–Cys-1917. Residues Asn-1899 and Asn-1962 are each glycosylated (N-linked (GlcNAc...) asparagine). 7 disulfides stabilise this stretch: Cys-1963/Cys-2016, Cys-2060/Cys-2119, Cys-2163/Cys-2213, Cys-2261/Cys-2313, Cys-2359/Cys-2411, Cys-2454/Cys-2506, and Cys-2550/Cys-2605. N-linked (GlcNAc...) asparagine glycosylation occurs at Asn-2101. The residue at position 2603 (Tyr-2603) is a Phosphotyrosine.

Its subcellular location is the secreted. Functionally, involved in the control of early migration of neurons expressing gonadotropin-releasing hormone (GNRH neurons). May be involved in the maintenance of osteochondroprogenitor cells pool. This Homo sapiens (Human) protein is Immunoglobulin superfamily member 10 (IGSF10).